The chain runs to 421 residues: MNHLKDQSKSIVLGISSGIGIFLISGGINIFKNVGQYILNRINSNIYYRIDVDSKDKSFEWLLYWLSENDSIKVSNHLNAETVYNLVGKNPKVILVPSVGKHRIVYKGKWIWIDRVRDQQFDMGAGAPFESISISTYKSNAQLINQLLQEAMTLSLNRDIGKTVIYINGGNGNWERFGNPRSIRSLSSVILADDLKSKLIEDIKSFITNESWYRNRGIPYRRGYLLYGEPGNGKSSLINAIAGELNLDICIVSLSSKDIDDKQINHLLNNAPPKSILLIEDIDAAFKSHRDNVDSNNNNSNNNNSLTYSGLLNALDGVASQEGRILFMTTNKIELLDSALIREGRIDLKIKVSNATKSQAAQLFTHFYNLPTDNQLAIRFSENLHDHQLSMSQIQGFLLKYINSPEKAIEEVQSITPFNLN.

Over 1 to 10 (MNHLKDQSKS) the chain is Mitochondrial intermembrane. The chain crosses the membrane as a helical span at residues 11-31 (IVLGISSGIGIFLISGGINIF). Over 32 to 421 (KNVGQYILNR…VQSITPFNLN (390 aa)) the chain is Mitochondrial matrix. 228-235 (GEPGNGKS) contacts ATP.

It belongs to the AAA ATPase family. BCS1 subfamily.

Its subcellular location is the mitochondrion inner membrane. It catalyses the reaction ATP + H2O = ADP + phosphate + H(+). Its function is as follows. Chaperone necessary for the assembly of mitochondrial respiratory chain complex III. The protein is Probable mitochondrial chaperone BCS1-A (bcs1la) of Dictyostelium discoideum (Social amoeba).